We begin with the raw amino-acid sequence, 542 residues long: MTQMRDLMIINANVRTVDARNSCAQAVLVSGGRIAIVGTETEVRGAAAPDAEVLDVSGKTVVPGFIDAHNHLSVAAFAPDSVDCSTPPLATLDEVLEVIERHCRNIPPGQWVRGINFHASHIREQRNPTRYELDEVAPNNPFFLIDASCHAGFANSAALDLVGIGAHTPEPWGGEIERDLSGKPTGTLLEAAANLLHSASWNDYAERDWDRAVELLHSKMNDYLAVGLTGVGDAMVTAKSAELYRRADAAGKMPFTLQQLHGGDHFFSMQDLGRSDTVDRIMEPESYLLRGGAMKIFVDRAYPSPAIDQIHDGCKTHVGANFYSKSEVHDLAVRASKLGINLAIHGMGNCAIDIVLDAYEAVRRQSNADTVLRLEHAFIAETGQGQRMADLGIDLVANPGLAFGWGEVFNMWRGENQEHLKLFPVRSMLDAGVRVSLASDHPCGTYSPAEIMWTAVARETMAGAPLEPDEAVTADEALRMYTINPAHASGRGSEEGSIEAGKRANLLVLDRDPVDCATGELRELQVLRTYVDGVLRYERTGS.

Positions 1-2 (MT) are excised as a propeptide.

Homodimer. Zn(2+) serves as cofactor.

The catalysed reaction is N-benzylformamide + H2O = benzylamine + formate. Completely inhibited by HgCl(2), CuCl, CuCl(2) and AgNO(3). Partially inhibited by ZnCl(2) and SnCl(2). Almost completely inhibited by the reducing reagent DTT. Partially inhibited by phenylhydrazine. Moderately inhibited by phenanthroline and 8-hydroxyquinoline. Completely inhibited by the thiol-specific inhibitors N-ethylmaleimide and p-chloromercuribenzoate. Not inhibited by the carbonyl-specific inhibitors aminoguanidine and semicarbazide, the chelating agents alpha,alpha'-dipyridyl, KCN, diethyldithiocarbamate and EDTA, or the oxidizing reagents and serine-modifying reagents such as H(2)O(2), ammonium persulfate, phenylmethanesulfonyl fluoride and diisopropyl fluorophosphates. Functionally, hydrolyzes N-substituted formamides, but not amides. N-benzylformamide is the preferred substrate, while N-butylformamide is hydrolyzed at a much lower rate. Has very low activity towards allylformamide, N-(2-cyclohex-1-enylethyl)formamide and N-(alpha-methylbenzyl)formamide. The sequence is that of N-substituted formamide deformylase from Arthrobacter pascens.